The sequence spans 1571 residues: Paternally-expressed gene 3 protein (1571 aa).

2 disordered regions span residues 1-120 (MYHH…NPIQ) and 137-241 (AEDD…QERG). 5 stretches are compositionally biased toward basic and acidic residues: residues 35 to 56 (GSERDLERRGRSRDVEPRDRWP), 80 to 99 (FGLDRDDDRRSMDYESRSQD), 169 to 186 (PEAKKPSHRRGICEDESS), 193 to 215 (KFIKDVARNPKSGRARELNERPP), and 223 to 241 (DNWKDSSSSRRESVIQERG). Residues 199–265 (ARNPKSGRAR…DLASRSRALE (67 aa)) are 10 X 5 AA repeat of P-H-X-X-E. Positions 199–265 (ARNPKSGRAR…DLASRSRALE (67 aa)) are 3 X 5 AA repeat of P-H-D-D-K. C2H2-type zinc fingers lie at residues 325–347 (YVCDECGRQFSVISEFVEHQIMH), 378–400 (FECKECGETFSRSAALAEHRQIH), 436–458 (YECKVCKETFLHSSALIEHQKIH), and 520–542 (YECKVCGESFLHLSSLREHQKIH). The interval 456 to 495 (KIHGRGNSDDRDNERERERDRLRARAREQRERERERERER) is disordered. Disordered stretches follow at residues 585-649 (ALMG…LKFP), 672-713 (EAQK…TYEG), and 764-820 (REDA…AKKK). A compositionally biased stretch (basic and acidic residues) spans 592-614 (SSEHQKNRSRRNFFEGRGFEKPF). Composition is skewed to polar residues over residues 770–781 (GSSSSNYHTPNV) and 799–808 (DVTFSVPSSS). The segment covering 809-820 (VREHQKARAKKK) has biased composition (basic and acidic residues). A C2H2-type 5 zinc finger spans residues 850–872 (FECQECGEAFARRSELIEHQKIH). Positions 937-1070 (FNAEEPHDKE…ESHGQEKVED (134 aa)) are disordered. Residues 940-1070 (EEPHDKETHG…ESHGQEKVED (131 aa)) show a composition bias toward basic and acidic residues. Tandem repeats lie at residues 942 to 946 (PHDKE), 967 to 971 (PHGDE), 987 to 991 (PHDDK), 992 to 996 (PHGQE), 997 to 1001 (PHDDK), 1002 to 1006 (PHGQE), 1007 to 1011 (PHDDK), 1012 to 1016 (PHGQE), 1017 to 1021 (PHGDE), 1022 to 1026 (PHGQE), 1027 to 1031 (PHGDE), 1032 to 1036 (PHDKE), and 1047 to 1051 (PHSEE). C2H2-type zinc fingers lie at residues 1091–1113 (YECQDCGLGFTDLNDLTSHQDTH), 1147–1169 (YECPKCGESFIHSSLLFEHQRVH), 1209–1231 (IRCRQCGQGFIHSSALNEHMRQH), and 1266–1289 (FECTICGECFFTAKQLGDHHTKVH). The segment at 1317 to 1339 (YECKDCGQSFLDDTVIAERMVFH) adopts a C2H2-type 10; degenerate zinc-finger fold. The segment at 1373–1487 (NAEAAEPEVE…DQEIEVEEPY (115 aa)) is disordered. Acidic residues-rich tracts occupy residues 1377-1397 (AEPEVEAAEPEVEAAEPEVEA), 1405-1418 (EGPDGEAAEPDGEA), and 1431-1485 (DADE…EVEE). C2H2-type zinc fingers lie at residues 1488–1510 (YNCHECAETFASSSAFGEHLKSH) and 1547–1569 (FKCDVCGQLFNDRLSLARHQNSH).

The protein belongs to the krueppel C2H2-type zinc-finger protein family. Homodimer. Interacts with SIAH1A and SIAH2. Interacts with TRAF2. In terms of tissue distribution, brain, glial cells, neurons, skeletal muscle, uterus and placenta. In the placenta it is found in all trophoblast cells.

It localises to the nucleus. The protein resides in the cytoplasm. Induces apoptosis in cooperation with SIAH1A. Acts as a mediator between p53/TP53 and BAX in a neuronal death pathway that is activated by DNA damage. Acts synergistically with TRAF2 and inhibits TNF induced apoptosis through activation of NF-kappa-B. Plays a role in regulating maternal behavior and offspring growth. This chain is Paternally-expressed gene 3 protein (Peg3), found in Mus musculus (Mouse).